Here is a 624-residue protein sequence, read N- to C-terminus: DNA-directed RNA polymerase subunit gamma (624 aa).

Residues cysteine 70, cysteine 72, cysteine 85, and cysteine 88 each coordinate Zn(2+). Residues aspartate 466, aspartate 468, and aspartate 470 each coordinate Mg(2+).

The protein belongs to the RNA polymerase beta' chain family. RpoC1 subfamily. In terms of assembly, in cyanobacteria the RNAP catalytic core is composed of 2 alpha, 1 beta, 1 beta', 1 gamma and 1 omega subunit. When a sigma factor is associated with the core the holoenzyme is formed, which can initiate transcription. Mg(2+) serves as cofactor. Requires Zn(2+) as cofactor.

The catalysed reaction is RNA(n) + a ribonucleoside 5'-triphosphate = RNA(n+1) + diphosphate. DNA-dependent RNA polymerase catalyzes the transcription of DNA into RNA using the four ribonucleoside triphosphates as substrates. The polypeptide is DNA-directed RNA polymerase subunit gamma (Synechococcus sp. (strain ATCC 27144 / PCC 6301 / SAUG 1402/1) (Anacystis nidulans)).